We begin with the raw amino-acid sequence, 270 residues long: UPF0354 protein BA_4944/GBAA_4944/BAS4588 (270 aa).

The protein belongs to the UPF0354 family.

In Bacillus anthracis, this protein is UPF0354 protein BA_4944/GBAA_4944/BAS4588.